The chain runs to 203 residues: Large ribosomal subunit protein bL25 (203 aa).

The protein belongs to the bacterial ribosomal protein bL25 family. CTC subfamily. Part of the 50S ribosomal subunit; part of the 5S rRNA/L5/L18/L25 subcomplex. Contacts the 5S rRNA. Binds to the 5S rRNA independently of L5 and L18.

Functionally, this is one of the proteins that binds to the 5S RNA in the ribosome where it forms part of the central protuberance. This chain is Large ribosomal subunit protein bL25, found in Pseudomonas savastanoi pv. phaseolicola (strain 1448A / Race 6) (Pseudomonas syringae pv. phaseolicola (strain 1448A / Race 6)).